A 154-amino-acid chain; its full sequence is MPKGDGKLVAQNKKARHDYAIEETFEAGIVLQGTEIKSVRNARVNLKDSYARIDKGEIFLHNMHISPYEQGNRYNHDPLRTRKLLLHKKQISRLIGETKESGYSIVPLKMYIKDGYAKVLIGVARGKKKYDKRQDLKQKEAKRDIERAFKERQQ.

The interval 131–154 is disordered; sequence DKRQDLKQKEAKRDIERAFKERQQ. Residues 132-154 are compositionally biased toward basic and acidic residues; the sequence is KRQDLKQKEAKRDIERAFKERQQ.

Belongs to the SmpB family.

It is found in the cytoplasm. Its function is as follows. Required for rescue of stalled ribosomes mediated by trans-translation. Binds to transfer-messenger RNA (tmRNA), required for stable association of tmRNA with ribosomes. tmRNA and SmpB together mimic tRNA shape, replacing the anticodon stem-loop with SmpB. tmRNA is encoded by the ssrA gene; the 2 termini fold to resemble tRNA(Ala) and it encodes a 'tag peptide', a short internal open reading frame. During trans-translation Ala-aminoacylated tmRNA acts like a tRNA, entering the A-site of stalled ribosomes, displacing the stalled mRNA. The ribosome then switches to translate the ORF on the tmRNA; the nascent peptide is terminated with the 'tag peptide' encoded by the tmRNA and targeted for degradation. The ribosome is freed to recommence translation, which seems to be the essential function of trans-translation. This Listeria innocua serovar 6a (strain ATCC BAA-680 / CLIP 11262) protein is SsrA-binding protein.